A 465-amino-acid polypeptide reads, in one-letter code: Ribulose bisphosphate carboxylase large chain (465 aa).

The residue at position 4 (Lys-4) is an N6,N6,N6-trimethyllysine. Residues Asn-113 and Thr-163 each coordinate substrate. Lys-165 functions as the Proton acceptor in the catalytic mechanism. Residue Lys-167 coordinates substrate. Lys-191, Asp-193, and Glu-194 together coordinate Mg(2+). At Lys-191 the chain carries N6-carboxylysine. The Proton acceptor role is filled by His-284. Substrate-binding residues include Arg-285, His-317, and Ser-369.

Belongs to the RuBisCO large chain family. Type I subfamily. Heterohexadecamer of 8 large chains and 8 small chains; disulfide-linked. The disulfide link is formed within the large subunit homodimers. It depends on Mg(2+) as a cofactor. The disulfide bond which can form in the large chain dimeric partners within the hexadecamer appears to be associated with oxidative stress and protein turnover.

The protein resides in the plastid. It localises to the chloroplast. It catalyses the reaction 2 (2R)-3-phosphoglycerate + 2 H(+) = D-ribulose 1,5-bisphosphate + CO2 + H2O. The catalysed reaction is D-ribulose 1,5-bisphosphate + O2 = 2-phosphoglycolate + (2R)-3-phosphoglycerate + 2 H(+). In terms of biological role, ruBisCO catalyzes two reactions: the carboxylation of D-ribulose 1,5-bisphosphate, the primary event in carbon dioxide fixation, as well as the oxidative fragmentation of the pentose substrate in the photorespiration process. Both reactions occur simultaneously and in competition at the same active site. The sequence is that of Ribulose bisphosphate carboxylase large chain from Byrsonima crassifolia (Cajuil cimarron).